The primary structure comprises 166 residues: NAD(P)H-quinone oxidoreductase subunit I, chloroplastic (166 aa).

2 consecutive 4Fe-4S ferredoxin-type domains span residues 55–84 (GRIH…VDWK) and 95–124 (LNYS…MTEE). [4Fe-4S] cluster-binding residues include cysteine 64, cysteine 67, cysteine 70, cysteine 74, cysteine 104, cysteine 107, cysteine 110, and cysteine 114.

It belongs to the complex I 23 kDa subunit family. In terms of assembly, NDH is composed of at least 16 different subunits, 5 of which are encoded in the nucleus. It depends on [4Fe-4S] cluster as a cofactor.

It localises to the plastid. Its subcellular location is the chloroplast thylakoid membrane. The catalysed reaction is a plastoquinone + NADH + (n+1) H(+)(in) = a plastoquinol + NAD(+) + n H(+)(out). The enzyme catalyses a plastoquinone + NADPH + (n+1) H(+)(in) = a plastoquinol + NADP(+) + n H(+)(out). In terms of biological role, NDH shuttles electrons from NAD(P)H:plastoquinone, via FMN and iron-sulfur (Fe-S) centers, to quinones in the photosynthetic chain and possibly in a chloroplast respiratory chain. The immediate electron acceptor for the enzyme in this species is believed to be plastoquinone. Couples the redox reaction to proton translocation, and thus conserves the redox energy in a proton gradient. In Calea megacephala, this protein is NAD(P)H-quinone oxidoreductase subunit I, chloroplastic.